The chain runs to 614 residues: FAD-linked oxidoreductase ffsJ (614 aa).

The signal sequence occupies residues 1 to 19 (MRLTRALTPAILALPAAHA). Residues Asn-30, Asn-53, Asn-72, and Asn-114 are each glycosylated (N-linked (GlcNAc...) asparagine). In terms of domain architecture, FAD-binding PCMH-type spans 119–301 (TGSLPAYYID…LSSTHRVEPE (183 aa)). Asn-314, Asn-329, Asn-461, Asn-465, Asn-478, and Asn-514 each carry an N-linked (GlcNAc...) asparagine glycan. A disordered region spans residues 453–495 (NGHGRSNNNNSNNSSTSTSTSTSSKNGSVKPYAYGGKETTSST). The span at 456-480 (GRSNNNNSNNSSTSTSTSTSSKNGS) shows a compositional bias: low complexity.

Belongs to the oxygen-dependent FAD-linked oxidoreductase family. It depends on FAD as a cofactor.

Its pathway is mycotoxin biosynthesis. FAD-linked oxidoreductase; part of the gene cluster that mediates the biosynthesis of the cytotoxic leucine-containing cytochalasans, including aspochalasin C, aspochalasin E, TMC-169, flavichalasine F, aspergillin PZ, aspochalasin M and flavichalasine G. The first step in the pathway is catalyzed by the hybrid PKS-NRPS ffsA that utilizes 8 units of malonyl-CoA to iteratively assemble the octaketide chain before addition of L-leucine by the C-terminal NRPS modules. Because ffsA lacks a designated enoylreductase (ER) domain, the required activity is provided the enoyl reductase fssC. The methyltransferase (MT) domain of ffsA catalyzes the alpha-methylation at C10 and C14 using S-adenosyl-L-methionine as the methyl-donating cosubstrate. Reduction by the hydrolyase ffsE, followed by dehydration and intra-molecular Diels-Alder cyclization by the Diels-Alderase ffsF then yield the required isoindolone-fused macrocycle. A number of oxidative steps catalyzed by the tailoring cytochrome P450 monooxygenase ffsD, the FAD-linked oxidoreductase ffsJ and the short-chain dehydrogenase/reductase ffsI, are further required to afford the final products. This Aspergillus flavipes protein is FAD-linked oxidoreductase ffsJ.